The primary structure comprises 512 residues: Cobyric acid synthase (512 aa).

Residues 262–442 (WLRVAAIRLP…WHGLLETDRF (181 aa)) form the GATase cobBQ-type domain. The active-site Nucleophile is Cys343. The active site involves His434.

It belongs to the CobB/CobQ family. CobQ subfamily.

Its pathway is cofactor biosynthesis; adenosylcobalamin biosynthesis. Catalyzes amidations at positions B, D, E, and G on adenosylcobyrinic A,C-diamide. NH(2) groups are provided by glutamine, and one molecule of ATP is hydrogenolyzed for each amidation. The protein is Cobyric acid synthase of Rhodococcus jostii (strain RHA1).